We begin with the raw amino-acid sequence, 365 residues long: GTPase Obg (365 aa).

The 159-residue stretch at 1 to 159 (MKFIDEARIE…RMLKLELKVL (159 aa)) folds into the Obg domain. The OBG-type G domain maps to 160–334 (ADVGLLGMPN…LIYAIKDHLQ (175 aa)). Residues 166-173 (GMPNAGKS), 191-195 (FTTLH), 213-216 (DIPG), 284-287 (NKLD), and 315-317 (SAL) each bind GTP. Mg(2+) is bound by residues Ser-173 and Thr-193.

It belongs to the TRAFAC class OBG-HflX-like GTPase superfamily. OBG GTPase family. Monomer. Mg(2+) serves as cofactor.

The protein resides in the cytoplasm. Functionally, an essential GTPase which binds GTP, GDP and possibly (p)ppGpp with moderate affinity, with high nucleotide exchange rates and a fairly low GTP hydrolysis rate. Plays a role in control of the cell cycle, stress response, ribosome biogenesis and in those bacteria that undergo differentiation, in morphogenesis control. The protein is GTPase Obg of Cupriavidus taiwanensis (strain DSM 17343 / BCRC 17206 / CCUG 44338 / CIP 107171 / LMG 19424 / R1) (Ralstonia taiwanensis (strain LMG 19424)).